The following is a 351-amino-acid chain: DNA polymerase IV (351 aa).

Residues Ile-4 to Gly-185 enclose the UmuC domain. Mg(2+) contacts are provided by Asp-8 and Asp-103. Glu-104 is a catalytic residue.

The protein belongs to the DNA polymerase type-Y family. As to quaternary structure, monomer. It depends on Mg(2+) as a cofactor.

It localises to the cytoplasm. The catalysed reaction is DNA(n) + a 2'-deoxyribonucleoside 5'-triphosphate = DNA(n+1) + diphosphate. In terms of biological role, poorly processive, error-prone DNA polymerase involved in untargeted mutagenesis. Copies undamaged DNA at stalled replication forks, which arise in vivo from mismatched or misaligned primer ends. These misaligned primers can be extended by PolIV. Exhibits no 3'-5' exonuclease (proofreading) activity. May be involved in translesional synthesis, in conjunction with the beta clamp from PolIII. The sequence is that of DNA polymerase IV from Escherichia coli O157:H7.